The following is a 153-amino-acid chain: NADH dehydrogenase [ubiquinone] 1 beta subcomplex subunit 11, mitochondrial (153 aa).

The transit peptide at 1–29 directs the protein to the mitochondrion; sequence MAAGLFGLSARRLLAAAATRGLPAARVRW. A disordered region spans residues 49–72; sequence PEPTTQWQEDLDPEDENLYEKNPD. A helical transmembrane segment spans residues 89 to 109; it reads LVFFFGVSIILVLGSTFVAYL.

This sequence belongs to the complex I NDUFB11 subunit family. In terms of assembly, complex I is composed of 45 different subunits. Interacts with BCAP31.

The protein localises to the mitochondrion inner membrane. In terms of biological role, accessory subunit of the mitochondrial membrane respiratory chain NADH dehydrogenase (Complex I), that is believed not to be involved in catalysis. Complex I functions in the transfer of electrons from NADH to the respiratory chain. The immediate electron acceptor for the enzyme is believed to be ubiquinone. The polypeptide is NADH dehydrogenase [ubiquinone] 1 beta subcomplex subunit 11, mitochondrial (NDUFB11) (Pongo pygmaeus (Bornean orangutan)).